The primary structure comprises 75 residues: U6-lycotoxin-Ls1a (75 aa).

Residues 1–21 form the signal peptide; sequence MKLLLFTALVLVVISLIEVEA. Residues 22–25 constitute a propeptide that is removed on maturation; that stretch reads ENER.

Belongs to the neurotoxin 19 (CSTX) family. 06 (U6-Lctx) subfamily. In terms of processing, contains 4 disulfide bonds. As to expression, expressed by the venom gland.

It localises to the secreted. The protein is U6-lycotoxin-Ls1a of Lycosa singoriensis (Wolf spider).